Consider the following 314-residue polypeptide: Acetyl-coenzyme A carboxylase carboxyl transferase subunit beta (314 aa).

One can recognise a CoA carboxyltransferase N-terminal domain in the interval leucine 44–leucine 311. Cysteine 48, cysteine 51, cysteine 67, and cysteine 70 together coordinate Zn(2+). The C4-type zinc finger occupies cysteine 48 to cysteine 70.

This sequence belongs to the AccD/PCCB family. Acetyl-CoA carboxylase is a heterohexamer composed of biotin carboxyl carrier protein (AccB), biotin carboxylase (AccC) and two subunits each of ACCase subunit alpha (AccA) and ACCase subunit beta (AccD). It depends on Zn(2+) as a cofactor.

The protein resides in the cytoplasm. The catalysed reaction is N(6)-carboxybiotinyl-L-lysyl-[protein] + acetyl-CoA = N(6)-biotinyl-L-lysyl-[protein] + malonyl-CoA. It functions in the pathway lipid metabolism; malonyl-CoA biosynthesis; malonyl-CoA from acetyl-CoA: step 1/1. Functionally, component of the acetyl coenzyme A carboxylase (ACC) complex. Biotin carboxylase (BC) catalyzes the carboxylation of biotin on its carrier protein (BCCP) and then the CO(2) group is transferred by the transcarboxylase to acetyl-CoA to form malonyl-CoA. The protein is Acetyl-coenzyme A carboxylase carboxyl transferase subunit beta of Brevibacillus brevis (strain 47 / JCM 6285 / NBRC 100599).